We begin with the raw amino-acid sequence, 278 residues long: Checkpoint protein HUS1B (278 aa).

This sequence belongs to the HUS1 family. Interacts with RAD1 and RAD9B. Expressed strongly in testis, less in spleen, thymus, prostate, colon and leukocytes.

This is Checkpoint protein HUS1B (HUS1B) from Homo sapiens (Human).